An 86-amino-acid chain; its full sequence is Class II hydrophobin 2 (86 aa).

The N-terminal stretch at 1–15 (MQFFAVALFATSALA) is a signal peptide. Disulfide bonds link cysteine 18–cysteine 67, cysteine 28–cysteine 58, cysteine 29–cysteine 41, and cysteine 68–cysteine 79.

Belongs to the cerato-ulmin hydrophobin family. In terms of assembly, homodimer. Homodimers further self-assemble to form highly ordered films at water-air interfaces through intermolecular interactions.

The protein resides in the secreted. Its subcellular location is the spore wall. It localises to the cell wall. Functionally, aerial growth, conidiation, and dispersal of filamentous fungi in the environment rely upon a capability of their secreting small amphipathic proteins called hydrophobins (HPBs) with low sequence identity. Class I can self-assemble into an outermost layer of rodlet bundles on aerial cell surfaces, conferring cellular hydrophobicity that supports fungal growth, development and dispersal; whereas Class II form highly ordered films at water-air interfaces through intermolecular interactions but contribute nothing to the rodlet structure. Hbf2 is a class II hydrophobin that is involved in sporuration. The chain is Class II hydrophobin 2 from Hypocrea jecorina (Trichoderma reesei).